We begin with the raw amino-acid sequence, 436 residues long: MLDIKVIRENLDWSKKKLATRGIKPEELDKLVAIDKERREALTKSEQLKQKRNEVSDQIAQAKRNKEDASDAIKTMREVGKEIKDLDKEVEDLTQKQKYILLRLPNFPADSDPIGPDESYNEEVRKWNEPTKFDFEPKPHWEIGTELNILDWDTAAKVSGARFVYYKGAGALLERAVSNFFLDENTKDGYTEVIPPYLVNDASMQGTGQFPKFTEDVYTIVDNDDPDKPRDLTLIPTAEVPLVNYFRGKILDAKQLPINVTAFSPAFRSEAGSAGRDTRGLIRMHEFRKVEMVKIVDEDSSWDELEKLTHNAEHLLQKLGLPYHVVALSTGDASFTSAKTYDLEVWMPAQDKYREISSCSNCTDFQARRSLIRYRDENGKLHLAHTLNGSGLAVGRTVAAILENYQNEDGTVNVPEALQPYMHGMKVITKEPKFGE.

The span at 43 to 55 shows a compositional bias: basic and acidic residues; it reads TKSEQLKQKRNEV. Positions 43-69 are disordered; sequence TKSEQLKQKRNEVSDQIAQAKRNKEDA. 237–239 is an L-serine binding site; it reads TAE. An ATP-binding site is contributed by 268-270; sequence RSE. Residue glutamate 291 coordinates L-serine. 355–358 lines the ATP pocket; the sequence is EISS. L-serine is bound at residue serine 390.

This sequence belongs to the class-II aminoacyl-tRNA synthetase family. Type-1 seryl-tRNA synthetase subfamily. As to quaternary structure, homodimer. The tRNA molecule binds across the dimer.

Its subcellular location is the cytoplasm. It carries out the reaction tRNA(Ser) + L-serine + ATP = L-seryl-tRNA(Ser) + AMP + diphosphate + H(+). The enzyme catalyses tRNA(Sec) + L-serine + ATP = L-seryl-tRNA(Sec) + AMP + diphosphate + H(+). It participates in aminoacyl-tRNA biosynthesis; selenocysteinyl-tRNA(Sec) biosynthesis; L-seryl-tRNA(Sec) from L-serine and tRNA(Sec): step 1/1. In terms of biological role, catalyzes the attachment of serine to tRNA(Ser). Is also able to aminoacylate tRNA(Sec) with serine, to form the misacylated tRNA L-seryl-tRNA(Sec), which will be further converted into selenocysteinyl-tRNA(Sec). The chain is Serine--tRNA ligase from Lactobacillus gasseri (strain ATCC 33323 / DSM 20243 / BCRC 14619 / CIP 102991 / JCM 1131 / KCTC 3163 / NCIMB 11718 / NCTC 13722 / AM63).